The chain runs to 194 residues: Homing endonuclease I-DmoI (194 aa).

Residues 14–147 (LLGLIIGDGG…VSRWLNNLGV (134 aa)) form the DOD-type homing endonuclease domain. Catalysis depends on residues Asp-21 and Glu-117.

It depends on a divalent metal cation as a cofactor.

Functionally, endonuclease involved in intron homing. Recognizes DNA in the 23S rRNA gene intron (minimally 5'-CCGGGTAAGTTCCGG-3'), cutting after A-8 on the top and C-11 on the bottom strand. Has a slow turnover rate, cuts the coding strand with a slight preference over the non-coding strand. The sequence is that of Homing endonuclease I-DmoI from Desulfurococcus mucosus (Desulfurococcus mobilis).